The sequence spans 133 residues: uncharacterized protein (133 aa).

Positions 3-106 (IFTKIINREL…PTRSLSDFGF (104 aa)) constitute an HIT domain. The Histidine triad motif motif lies at 90–94 (HLHIH).

This is an uncharacterized protein from Mycobacterium tuberculosis (strain ATCC 25618 / H37Rv).